The following is a 302-amino-acid chain: Sulfate adenylyltransferase subunit 2 (302 aa).

It belongs to the PAPS reductase family. CysD subfamily. In terms of assembly, heterodimer composed of CysD, the smaller subunit, and CysN.

The catalysed reaction is sulfate + ATP + H(+) = adenosine 5'-phosphosulfate + diphosphate. Its pathway is sulfur metabolism; hydrogen sulfide biosynthesis; sulfite from sulfate: step 1/3. Functionally, with CysN forms the ATP sulfurylase (ATPS) that catalyzes the adenylation of sulfate producing adenosine 5'-phosphosulfate (APS) and diphosphate, the first enzymatic step in sulfur assimilation pathway. APS synthesis involves the formation of a high-energy phosphoric-sulfuric acid anhydride bond driven by GTP hydrolysis by CysN coupled to ATP hydrolysis by CysD. This chain is Sulfate adenylyltransferase subunit 2, found in Serratia proteamaculans (strain 568).